The sequence spans 486 residues: Aspartyl/glutamyl-tRNA(Asn/Gln) amidotransferase subunit B (486 aa).

This sequence belongs to the GatB/GatE family. GatB subfamily. As to quaternary structure, heterotrimer of A, B and C subunits.

The enzyme catalyses L-glutamyl-tRNA(Gln) + L-glutamine + ATP + H2O = L-glutaminyl-tRNA(Gln) + L-glutamate + ADP + phosphate + H(+). It carries out the reaction L-aspartyl-tRNA(Asn) + L-glutamine + ATP + H2O = L-asparaginyl-tRNA(Asn) + L-glutamate + ADP + phosphate + 2 H(+). Allows the formation of correctly charged Asn-tRNA(Asn) or Gln-tRNA(Gln) through the transamidation of misacylated Asp-tRNA(Asn) or Glu-tRNA(Gln) in organisms which lack either or both of asparaginyl-tRNA or glutaminyl-tRNA synthetases. The reaction takes place in the presence of glutamine and ATP through an activated phospho-Asp-tRNA(Asn) or phospho-Glu-tRNA(Gln). This is Aspartyl/glutamyl-tRNA(Asn/Gln) amidotransferase subunit B from Orientia tsutsugamushi (strain Ikeda) (Rickettsia tsutsugamushi).